Reading from the N-terminus, the 101-residue chain is Small ribosomal subunit protein uS14 (101 aa).

Belongs to the universal ribosomal protein uS14 family. Part of the 30S ribosomal subunit. Contacts proteins S3 and S10.

Binds 16S rRNA, required for the assembly of 30S particles and may also be responsible for determining the conformation of the 16S rRNA at the A site. The polypeptide is Small ribosomal subunit protein uS14 (Gluconacetobacter diazotrophicus (strain ATCC 49037 / DSM 5601 / CCUG 37298 / CIP 103539 / LMG 7603 / PAl5)).